The sequence spans 124 residues: Small ribosomal subunit protein uS13 (124 aa).

Residues 89-124 are disordered; sequence GRRHRQGLPVRGQRTKTNARTRKGPKRTVAGKKKAK. Over residues 101–124 the composition is skewed to basic residues; sequence QRTKTNARTRKGPKRTVAGKKKAK.

It belongs to the universal ribosomal protein uS13 family. In terms of assembly, part of the 30S ribosomal subunit. Forms a loose heterodimer with protein S19. Forms two bridges to the 50S subunit in the 70S ribosome.

Located at the top of the head of the 30S subunit, it contacts several helices of the 16S rRNA. In the 70S ribosome it contacts the 23S rRNA (bridge B1a) and protein L5 of the 50S subunit (bridge B1b), connecting the 2 subunits; these bridges are implicated in subunit movement. Contacts the tRNAs in the A and P-sites. This Nocardioides sp. (strain ATCC BAA-499 / JS614) protein is Small ribosomal subunit protein uS13.